Consider the following 120-residue polypeptide: uncharacterized protein (120 aa).

It to E.coli YiaW.

This is an uncharacterized protein from Escherichia coli (strain K12).